The primary structure comprises 144 residues: NADH dehydrogenase [ubiquinone] 1 alpha subcomplex subunit 13 (144 aa).

Ala-2 is modified (N-acetylalanine). The helical transmembrane segment at 30–51 (LSGYSMFAVGIGALLFGYWSMM) threads the bilayer.

In terms of assembly, complex I is composed of 45 different subunits. Interacts with CARD15, but not with CARD4. Interacts with STAT3, but not with STAT1, STAT2 and STAT5A. Interacts with OLFM4.

It is found in the mitochondrion inner membrane. The protein resides in the nucleus. Its function is as follows. Accessory subunit of the mitochondrial membrane respiratory chain NADH dehydrogenase (Complex I), that is believed not to be involved in catalysis. Complex I functions in the transfer of electrons from NADH to the respiratory chain. The immediate electron acceptor for the enzyme is believed to be ubiquinone. Involved in the interferon/all-trans-retinoic acid (IFN/RA) induced cell death. This apoptotic activity is inhibited by interaction with viral IRF1. Prevents the transactivation of STAT3 target genes. May play a role in CARD15-mediated innate mucosal responses and serve to regulate intestinal epithelial cell responses to microbes. This chain is NADH dehydrogenase [ubiquinone] 1 alpha subcomplex subunit 13 (NDUFA13), found in Bos taurus (Bovine).